The chain runs to 504 residues: Pyruvate kinase (504 aa).

Arginine 53 is a substrate binding site. The K(+) site is built by asparagine 55, serine 57, aspartate 88, and threonine 89. 55 to 58 (NFSH) lines the ATP pocket. The ATP site is built by arginine 95 and lysine 181. Glutamate 246 contacts Mg(2+). Substrate is bound by residues glycine 269, aspartate 270, and threonine 302. Residue aspartate 270 coordinates Mg(2+).

It belongs to the pyruvate kinase family. Homotetramer. It depends on Mg(2+) as a cofactor. The cofactor is K(+).

The enzyme catalyses pyruvate + ATP = phosphoenolpyruvate + ADP + H(+). The protein operates within carbohydrate degradation; glycolysis; pyruvate from D-glyceraldehyde 3-phosphate: step 5/5. In Debaryomyces hansenii (strain ATCC 36239 / CBS 767 / BCRC 21394 / JCM 1990 / NBRC 0083 / IGC 2968) (Yeast), this protein is Pyruvate kinase (PYK1).